The chain runs to 550 residues: Spermatogenesis-associated protein 2 (550 aa).

The PUB domain occupies 83–156; sequence TVGTAFATLE…YNVRDHPGGA (74 aa). The PIM motif signature appears at 320 to 337; that stretch reads YHLSSLDEVDLYTERGLG. The tract at residues 457-480 is disordered; it reads SKPVGSGPSPVGSLVSSGSSSSGG.

The protein belongs to the SPATA2 family.

It localises to the cytoplasm. The protein resides in the nucleus. Bridging factor that mediates the recruitment of cyld to the LUBAC complex, thereby regulating TNF-alpha-induced necroptosis. Required to activate the 'Met-1'- (linear) and 'Lys-63'-linked deubiquitinase activities of cyld. The protein is Spermatogenesis-associated protein 2 of Danio rerio (Zebrafish).